A 386-amino-acid chain; its full sequence is Cytotoxic granule associated RNA binding protein TIA1 (386 aa).

An N-acetylmethionine modification is found at M1. RRM domains are found at residues 7–83 (KTLY…WATT), 106–184 (FHVF…WATR), and 214–286 (CTVY…WGKE). Residues 355 to 376 (GPNYSVPPPQGQNGSMLPSQPA) are disordered.

In terms of assembly, homooligomer; homooligomerization is induced by Zn(2+). Interacts with FASTK; the interactions leads to its phosphorylation. Interacts (via RRM1 and the C-terminal glutamine-rich (Q) sequence) with SNRPC/U1-C (via N-terminus); thereby facilitating spliceosomal U1 snRNP recruitment to 5' splice sites. Phosphorylatedby FASTK; phosphorylation occurs after FAS ligation in FAS-mediated apoptosis and before DNA fragmentation.

It localises to the nucleus. Its subcellular location is the cytoplasm. The protein resides in the stress granule. RNA-binding protein involved in the regulation of alternative pre-RNA splicing and mRNA translation by binding to uridine-rich (U-rich) RNA sequences. Binds to U-rich sequences immediately downstream from a 5' splice sites in a uridine-rich small nuclear ribonucleoprotein (U snRNP)-dependent fashion, thereby modulating alternative pre-RNA splicing. Preferably binds to the U-rich IAS1 sequence in a U1 snRNP-dependent manner; this binding is optimal if a 5' splice site is adjacent to IAS1. Activates the use of heterologous 5' splice sites; the activation depends on the intron sequence downstream from the 5' splice site, with a preference for a downstream U-rich sequence. By interacting with SNRPC/U1-C, promotes recruitment and binding of spliceosomal U1 snRNP to 5' splice sites followed by U-rich sequences, thereby facilitating atypical 5' splice site recognition by U1 snRNP. Activates splicing of alternative exons with weak 5' splice sites followed by a U-rich stretch on its own pre-mRNA and on TIAR mRNA. Acts as a modulator of alternative splicing for the apoptotic FAS receptor, thereby promoting apoptosis. Binds to the 5' splice site region of FAS intron 5 to promote accumulation of transcripts that include exon 6 at the expense of transcripts in which exon 6 is skipped, thereby leading to the transcription of a membrane-bound apoptotic FAS receptor, which promotes apoptosis. Binds to a conserved AU-rich cis element in COL2A1 intron 2 and modulates alternative splicing of COL2A1 exon 2. Also binds to the equivalent AT-rich element in COL2A1 genomic DNA, and may thereby be involved in the regulation of transcription. Involved in the repression of mRNA translation by binding to AU-rich elements (AREs) located in mRNA 3' untranslated regions (3' UTRs), including target ARE-bearing mRNAs encoding TNF and PTGS2. Also participates in the cellular response to environmental stress, by acting downstream of the stress-induced phosphorylation of EIF2S1/EIF2A to promote the recruitment of untranslated mRNAs to cytoplasmic stress granules (SGs), leading to stress-induced translational arrest. Formation and recruitment to SGs is regulated by Zn(2+). Possesses nucleolytic activity against cytotoxic lymphocyte target cells. This chain is Cytotoxic granule associated RNA binding protein TIA1 (Tia1), found in Mus musculus (Mouse).